The following is a 246-amino-acid chain: Envelope glycoprotein L (246 aa).

The signal sequence occupies residues 1 to 19 (MKTNIFFIFLISILNQIYA). In terms of domain architecture, gL betaherpesvirus-type spans 29–235 (LEQECIKNIL…EKYNEVLPFR (207 aa)). A disulfide bridge connects residues cysteine 134 and cysteine 139.

The protein belongs to the herpesviridae glycoprotein L (gL) family. Betaherpesvirinae gL subfamily. As to quaternary structure, interacts with glycoprotein H (gH); this interaction is necessary for the correct processing and cell surface expression of gH.

It is found in the virion membrane. The protein resides in the host cell membrane. Its subcellular location is the host Golgi apparatus. The protein localises to the host trans-Golgi network. Its function is as follows. The heterodimer glycoprotein H-glycoprotein L is required for the fusion of viral and plasma membranes leading to virus entry into the host cell. Acts as a functional inhibitor of gH and maintains gH in an inhibited form. Upon binding to host integrins, gL dissociates from gH leading to activation of the viral fusion glycoproteins gB and gH. This chain is Envelope glycoprotein L, found in Homo sapiens (Human).